A 399-amino-acid polypeptide reads, in one-letter code: MSERVILAYSGGLDTSVAISWIGKETGKEVVAVAIDLGQGGEDMEVVRQRALDCGAVEAVVVDARDEFAEEYCLPTIQSNALYMDRYPLVSAISRPLIVKHLVKAAREHGGGVVAHGCTGKGNDQVRFEVGFASLAPDLQVLAPVRDYAWTREKAIAFAEENAIPINVTKRSPFSIDQNVWGRAVETGFLEHLWNAPTKDVYDYTEDPTVHWNTPDEVVIGFDKGVPVSIDGRPVSVLQAIEELNRRAGAQGVGRLDVVEDRLVGIKSREIYEAPGAMVLITAHTELEHVTLERELGRFKRHTDQKWGELVYDGLWYSPLKRALESFVAHTQEHVSGEIRLVLHGGHISVNGRRSAESLYDFNLATYDEGDSFDQSAAKGFVHLHGLSSRISAKRDLGI.

Position 8 to 16 (8 to 16 (AYSGGLDTS)) interacts with ATP. Tyr87 provides a ligand contact to L-citrulline. ATP is bound at residue Gly117. Positions 119, 123, and 124 each coordinate L-aspartate. Asn123 provides a ligand contact to L-citrulline. Residues Arg127, Ser175, Glu260, and Tyr272 each coordinate L-citrulline.

It belongs to the argininosuccinate synthase family. Type 1 subfamily. Homotetramer.

It localises to the cytoplasm. The catalysed reaction is L-citrulline + L-aspartate + ATP = 2-(N(omega)-L-arginino)succinate + AMP + diphosphate + H(+). It functions in the pathway amino-acid biosynthesis; L-arginine biosynthesis; L-arginine from L-ornithine and carbamoyl phosphate: step 2/3. The sequence is that of Argininosuccinate synthase from Mycolicibacterium smegmatis (strain ATCC 700084 / mc(2)155) (Mycobacterium smegmatis).